The chain runs to 208 residues: Probable nicotinate-nucleotide adenylyltransferase (208 aa).

It belongs to the NadD family.

The catalysed reaction is nicotinate beta-D-ribonucleotide + ATP + H(+) = deamido-NAD(+) + diphosphate. Its pathway is cofactor biosynthesis; NAD(+) biosynthesis; deamido-NAD(+) from nicotinate D-ribonucleotide: step 1/1. Functionally, catalyzes the reversible adenylation of nicotinate mononucleotide (NaMN) to nicotinic acid adenine dinucleotide (NaAD). This Symbiobacterium thermophilum (strain DSM 24528 / JCM 14929 / IAM 14863 / T) protein is Probable nicotinate-nucleotide adenylyltransferase.